The following is a 664-amino-acid chain: UvrABC system protein B (664 aa).

The Helicase ATP-binding domain occupies 23–180; the sequence is EGLNRGMRFQ…EKLAKIGYQR (158 aa). 36–43 contacts ATP; it reads GVTGSGKT. The short motif at 89-112 is the Beta-hairpin element; that stretch reads YYDYYQPEAYIPTKDLYIEKNADI. A Helicase C-terminal domain is found at 426–588; sequence QVDDLINEIV…ITPRSIVKPL (163 aa). The UVR domain occupies 622–657; it reads EEYVALLEEEMYRAASELRYEDAAALRDELFRVKET.

It belongs to the UvrB family. In terms of assembly, forms a heterotetramer with UvrA during the search for lesions. Interacts with UvrC in an incision complex.

The protein resides in the cytoplasm. Functionally, the UvrABC repair system catalyzes the recognition and processing of DNA lesions. A damage recognition complex composed of 2 UvrA and 2 UvrB subunits scans DNA for abnormalities. Upon binding of the UvrA(2)B(2) complex to a putative damaged site, the DNA wraps around one UvrB monomer. DNA wrap is dependent on ATP binding by UvrB and probably causes local melting of the DNA helix, facilitating insertion of UvrB beta-hairpin between the DNA strands. Then UvrB probes one DNA strand for the presence of a lesion. If a lesion is found the UvrA subunits dissociate and the UvrB-DNA preincision complex is formed. This complex is subsequently bound by UvrC and the second UvrB is released. If no lesion is found, the DNA wraps around the other UvrB subunit that will check the other stand for damage. This is UvrABC system protein B from Thermotoga neapolitana (strain ATCC 49049 / DSM 4359 / NBRC 107923 / NS-E).